We begin with the raw amino-acid sequence, 468 residues long: MALWGGRFSGGPSEALAALSVSTQFDWRLARHDIAGSSAHAGVLHAAGLLDDDQYEGMMKALNALEEDVVSGRFVAQPEDEDVHTALERGLMERAGKDLGGRLRAGRSRNDQIIALLRRYLREEARSLAGELLGLAHVLSRQAEDVGDAVIAGRTHMQHAQPVLLAHQLLAHAWPLLRDVQRFRDLDARLDCSPYGSGALAGSSLGLDPEAVARDLGFSSSVPNSIDGTAARDVVAEFAFVAAQVGVDLSRLSEEIIIWNTREFGYVTLDDSFSTGSSIMPQKKNPDIAELARGKAGRLIGDLAGLMASLKGLPLAYARDLQEDKEPVFDQIDQLHLLLPAITGMVDTAVFNTDRMAEMAGQGFSLATDVAEWLVRQGVPFRVAHELSGACVRGAESQNKELADLTDQELIAIDPRLTPQVREVMTVQGSVRSRAGRGGTAPERVAEQITELREAIAGLRSFGEAETR.

Belongs to the lyase 1 family. Argininosuccinate lyase subfamily.

Its subcellular location is the cytoplasm. The enzyme catalyses 2-(N(omega)-L-arginino)succinate = fumarate + L-arginine. The protein operates within amino-acid biosynthesis; L-arginine biosynthesis; L-arginine from L-ornithine and carbamoyl phosphate: step 3/3. This chain is Argininosuccinate lyase, found in Cutibacterium acnes (strain DSM 16379 / KPA171202) (Propionibacterium acnes).